We begin with the raw amino-acid sequence, 438 residues long: Adenosylhomocysteinase (438 aa).

Positions 64, 139, and 164 each coordinate substrate. Residue 165 to 167 (TTT) coordinates NAD(+). Residues Lys-194 and Asp-198 each contribute to the substrate site. Residues Asn-199, 228–233 (GYGDVG), Glu-251, Asn-286, 307–309 (IGH), and Asn-352 contribute to the NAD(+) site.

The protein belongs to the adenosylhomocysteinase family. It depends on NAD(+) as a cofactor.

It is found in the cytoplasm. The enzyme catalyses S-adenosyl-L-homocysteine + H2O = L-homocysteine + adenosine. The protein operates within amino-acid biosynthesis; L-homocysteine biosynthesis; L-homocysteine from S-adenosyl-L-homocysteine: step 1/1. Functionally, may play a key role in the regulation of the intracellular concentration of adenosylhomocysteine. In Coxiella burnetii (strain RSA 493 / Nine Mile phase I), this protein is Adenosylhomocysteinase.